A 136-amino-acid polypeptide reads, in one-letter code: uncharacterized protein (136 aa).

The interval 1-100 (MQSREPSGWR…PCSGGPDRPE (100 aa)) is disordered. A compositionally biased stretch (basic residues) spans 66-75 (RLLRWHHRVP).

This is an uncharacterized protein from Homo sapiens (Human).